A 254-amino-acid chain; its full sequence is Metalloprotease YcaL (254 aa).

The signal sequence occupies residues 1–19 (MKNTKLLLAIATSAALLTG). Cysteine 20 carries the N-palmitoyl cysteine lipid modification. The S-diacylglycerol cysteine moiety is linked to residue cysteine 20. Histidine 134 serves as a coordination point for Zn(2+). Residue glutamate 135 is part of the active site. Histidine 138 and glutamate 193 together coordinate Zn(2+). Residues 227-254 (GRTQSMFDSHPPSTERAQHIRDRIASGK) are disordered. Over residues 242 to 254 (RAQHIRDRIASGK) the composition is skewed to basic and acidic residues.

It belongs to the peptidase M48B family. Zn(2+) is required as a cofactor.

Its subcellular location is the cell inner membrane. Functionally, involved in the degradation of the LPS-assembly protein LptD. Degrades LptD that have engaged the Bam complex but are stalled at an early step in the outer membrane protein assembly process. The sequence is that of Metalloprotease YcaL (ycaL) from Escherichia coli (strain K12).